The chain runs to 238 residues: MGRAYELRKGRRAKRFDRMAKAFTRLGKEIVMAAKQGGGNIETNSRLRTAVNNAKSVNMPKDRIDAAIKRASGKDESDYEEVVFEGYGPYGIAILVECATDNNTRTVANVRSYFTRSGGALGKTGSLEFLFERKGVIKIDGTGLDPEELELELIDFGAEEIVKDGNEIFIYTAFVDFGTMLKELEQRNITVINAETERIPNTTTTLTTEQQEEIYKLLEKFEDDDDVQAVFHNMAETE.

Belongs to the TACO1 family.

It localises to the cytoplasm. In Cytophaga hutchinsonii (strain ATCC 33406 / DSM 1761 / CIP 103989 / NBRC 15051 / NCIMB 9469 / D465), this protein is Probable transcriptional regulatory protein CHU_3516.